The sequence spans 147 residues: Large ribosomal subunit protein uL22 (147 aa).

The protein belongs to the universal ribosomal protein uL22 family. As to quaternary structure, part of the 50S ribosomal subunit.

Functionally, this protein binds specifically to 23S rRNA; its binding is stimulated by other ribosomal proteins, e.g. L4, L17, and L20. It is important during the early stages of 50S assembly. It makes multiple contacts with different domains of the 23S rRNA in the assembled 50S subunit and ribosome. Its function is as follows. The globular domain of the protein is located near the polypeptide exit tunnel on the outside of the subunit, while an extended beta-hairpin is found that lines the wall of the exit tunnel in the center of the 70S ribosome. This is Large ribosomal subunit protein uL22 from Fervidobacterium nodosum (strain ATCC 35602 / DSM 5306 / Rt17-B1).